Consider the following 382-residue polypeptide: Galactokinase (382 aa).

Glu34–Asp37 is a substrate binding site. Gly124–Ser130 lines the ATP pocket. Mg(2+) contacts are provided by Ser130 and Glu162. The active-site Proton acceptor is the Asp174. Tyr223 is a binding site for substrate.

It belongs to the GHMP kinase family. GalK subfamily.

The protein resides in the cytoplasm. It carries out the reaction alpha-D-galactose + ATP = alpha-D-galactose 1-phosphate + ADP + H(+). Its pathway is carbohydrate metabolism; galactose metabolism. Catalyzes the transfer of the gamma-phosphate of ATP to D-galactose to form alpha-D-galactose-1-phosphate (Gal-1-P). This chain is Galactokinase, found in Escherichia coli (strain SMS-3-5 / SECEC).